A 511-amino-acid polypeptide reads, in one-letter code: Serine hydroxymethyltransferase (511 aa).

Position 287 is an N6-(pyridoxal phosphate)lysine (lysine 287).

The protein belongs to the SHMT family. In terms of assembly, homotetramer. Pyridoxal 5'-phosphate is required as a cofactor.

It catalyses the reaction (6R)-5,10-methylene-5,6,7,8-tetrahydrofolate + glycine + H2O = (6S)-5,6,7,8-tetrahydrofolate + L-serine. The protein operates within one-carbon metabolism; tetrahydrofolate interconversion. Its function is as follows. Interconversion of serine and glycine. This is Serine hydroxymethyltransferase from Caenorhabditis briggsae.